Here is a 3011-residue protein sequence, read N- to C-terminus: Genome polyprotein (3011 aa).

At Ser2 the chain carries N-acetylserine; by host. An interaction with STAT1 region spans residues Ser2–Lys23. Residues Ser2 to Pro58 form an interaction with EIF2AK2/PKR region. An interaction with DDX3X region spans residues Ser2–Arg59. Positions Ser2–Ser75 are disordered. Residues Ser2–Asn168 are Cytoplasmic-facing. Short sequence motifs (nuclear localization signal) lie at residues Pro5–Arg13 and Pro38–Arg43. Over residues Pro7–Asn16 the composition is skewed to basic residues. Ser53 bears the Phosphoserine; by host mark. 2 short sequence motifs (nuclear localization signal) span residues Pro58–Pro64 and Pro66–Pro71. Basic residues predominate over residues Pro58–Ala68. Ser99 carries the post-translational modification Phosphoserine; by host. Residues Pro112 to Ala152 are important for endoplasmic reticulum and mitochondrial localization. Ser116 bears the Phosphoserine; by host PKA mark. Residues Val122–Ser173 are interaction with APOA2. An important for lipid droplets localization region spans residues Tyr164–Gly167. A helical membrane pass occupies residues Leu169–Ala189. The propeptide at Leu178–Ala191 is ER anchor for the core protein, removed in mature form by host signal peptidase. Residues Ser190–Gly358 lie on the Lumenal side of the membrane. Asn196, Asn209, and Asn234 each carry an N-linked (GlcNAc...) asparagine; by host glycan. Positions Ile265–Arg296 are important for fusion. Asn305 is a glycosylation site (N-linked (GlcNAc...) asparagine; by host). The helical transmembrane segment at Leu359–Ala379 threads the bilayer. The Lumenal segment spans residues Gly380–Leu725. Residues Thr385–Ile411 form an HVR1 region. 4 N-linked (GlcNAc...) (high mannose) asparagine; by host glycosylation sites follow: Asn417, Asn423, Asn430, and Asn448. Intrachain disulfides connect Cys429–Cys552, Cys452–Cys459, Cys486–Cys494, and Cys503–Cys508. The tract at residues His474–Ser479 is HVR2. The interval Asp480 to Pro493 is CD81-binding 1. Asn532 carries an N-linked (GlcNAc...) (high mannose) asparagine; by host glycan. N-linked (GlcNAc...) asparagine; by host glycosylation is present at Asn540. Positions Pro544–Gly551 are CD81-binding 2. Residue Asn556 is glycosylated (N-linked (GlcNAc...) (high mannose) asparagine; by host). A disulfide bond links Cys564 and Cys569. Asn576 is a glycosylation site (N-linked (GlcNAc...) (high mannose) asparagine; by host). Disulfide bonds link Cys581–Cys585, Cys597–Cys620, and Cys607–Cys644. N-linked (GlcNAc...) (high mannose) asparagine; by host glycosylation is found at Asn623 and Asn645. Cys652 and Cys677 form a disulfide bridge. The segment at Ala660–Gln671 is PKR/eIF2-alpha phosphorylation homology domain (PePHD). A helical transmembrane segment spans residues Leu726–Ala746. The Lumenal portion of the chain corresponds to Ala747–Ala757. The chain crosses the membrane as a helical span at residues Ser758 to Leu778. The Cytoplasmic portion of the chain corresponds to Lys779–Lys781. The chain crosses the membrane as a helical span at residues Trp782 to Leu803. Topologically, residues Pro804–Glu813 are lumenal. Residues Leu814–Tyr834 traverse the membrane as a helical segment. Residues Tyr835–Tyr838 lie on the Cytoplasmic side of the membrane. Residues Met839–Val859 traverse the membrane as a helical segment. Residues Trp860–His881 lie on the Lumenal side of the membrane. A helical membrane pass occupies residues Pro882 to Leu902. The region spanning Gln903–Leu1026 is the Peptidase C18 domain. Topologically, residues Gln903 to Thr1657 are cytoplasmic. The protease NS2-3 stretch occupies residues Ala904–Arg1206. Cys922 is lipidated: S-palmitoyl cysteine; by host. Positions Ala929 to Ile949 are interaction with host SCPS1. Residues His952, Glu972, and Cys993 each act as for protease NS2 activity; shared with dimeric partner in the active site. The Peptidase S29 domain maps to Ala1027 to Pro1208. Catalysis depends on charge relay system; for serine protease NS3 activity residues His1083 and Asp1107. 2 residues coordinate Zn(2+): Cys1123 and Cys1125. Ser1165 acts as the Charge relay system; for serine protease NS3 activity in catalysis. Residues Cys1171 and His1175 each contribute to the Zn(2+) site. Positions Pro1217–Thr1369 constitute a Helicase ATP-binding domain. Ala1230–Ser1237 is an ATP binding site. Mg(2+) contacts are provided by Ser1237 and Glu1317. The short motif at Asp1316–His1319 is the DECH box element. The RNA-binding stretch occupies residues Gln1486 to Gly1497. Residues Ser1658 to Gly1678 traverse the membrane as a helical segment. The tract at residues Ser1679–Gly1690 is NS3-binding. Over Ser1679 to Gln1805 the chain is Cytoplasmic. The chain crosses the membrane as a helical span at residues Thr1806–Ala1824. Residues Ala1825–Ala1828 are Lumenal-facing. The helical transmembrane segment at Phe1829 to Val1849 threads the bilayer. Position 1850 (Asp1850) is a topological domain, cytoplasmic. Residues Ile1851–Gly1871 form a helical membrane-spanning segment. Residues Glu1872–Asn1881 lie on the Lumenal side of the membrane. A helical transmembrane segment spans residues Leu1882–Leu1902. Residues Arg1903–Cys1972 lie on the Cytoplasmic side of the membrane. S-palmitoyl cysteine; by host attachment occurs at residues Cys1968 and Cys1972. An intramembrane segment occupies Ala1973–Gln2002. At Leu2003–Arg2990 the chain is on the cytoplasmic side. 4 residues coordinate Zn(2+): Cys2011, Cys2029, Cys2031, and Cys2052. Residues Glu2120 to Ala2208 form an FKBP8-binding region. The segment at Glu2120 to Thr2332 is transcriptional activation. An interaction with non-structural protein 4A region spans residues Pro2135–Pro2139. The tract at residues Arg2189–Leu2441 is interaction with host SKP2. Ser2194 bears the Phosphoserine; by host; in p56 mark. Ser2197, Ser2201, Ser2204, Ser2207, and Ser2210 each carry phosphoserine; by host; in p58. The ISDR stretch occupies residues Ser2210 to Lys2249. The tract at residues Ser2210 to Leu2275 is interaction with EIF2AK2/PKR. Positions Lys2249–Tyr2306 are NS4B-binding. Residues Thr2322–Pro2325 carry the SH3-binding motif. The Nuclear localization signal signature appears at Pro2326–Val2334. A Glycyl lysine isopeptide (Lys-Gly) (interchain with G-Cter in ubiquitin) cross-link involves residue Lys2350. A compositionally biased stretch (low complexity) spans Phe2352–Ser2373. The interval Phe2352–Ser2409 is disordered. Residues Ser2354–Glu2377 form a V3 region. Residues Ser2449 and Ser2462 each carry the phosphoserine; by host modification. Residues Pro2634–Asp2752 enclose the RdRp catalytic domain. Positions 2640, 2738, and 2739 each coordinate Mg(2+). The chain crosses the membrane as a helical span at residues Trp2991–Arg3011.

This sequence belongs to the hepacivirus polyprotein family. Homooligomer. Interacts with E1 (via C-terminus). Interacts with the non-structural protein 5A. Interacts (via N-terminus) with host STAT1 (via SH2 domain); this interaction results in decreased STAT1 phosphorylation and ubiquitin-mediated proteasome-dependent STAT1 degradation, leading to decreased IFN-stimulated gene transcription. Interacts with host STAT3; this interaction constitutively activates STAT3. Interacts with host LTBR receptor. Interacts with host TNFRSF1A receptor and possibly induces apoptosis. Interacts with host HNRPK. Interacts with host YWHAE. Interacts with host UBE3A/E6AP. Interacts with host DDX3X. Interacts with host APOA2. Interacts with host RXRA protein. Interacts with host SP110 isoform 3/Sp110b; this interaction sequesters the transcriptional corepressor SP110 away from the nucleus. Interacts with host CREB3 nuclear transcription protein; this interaction triggers cell transformation. Interacts with host ACY3. Interacts with host C1QR1. Interacts with host RBM24; this interaction, which enhances the interaction of the mature core protein with 5'-UTR, may inhibit viral translation and favor replication. Interacts with host EIF2AK2/PKR; this interaction induces the autophosphorylation of EIF2AK2. Part of the viral assembly initiation complex composed of NS2, E1, E2, NS3, NS4A, NS5A and the mature core protein. As to quaternary structure, forms a heterodimer with envelope glycoprotein E2. Interacts with mature core protein. Interacts with protease NS2. The heterodimer E1/E2 interacts with host CLDN1; this interaction plays a role in viral entry into host cell. Interacts with host SPSB2 (via C-terminus). Part of the viral assembly initiation complex composed of NS2, E1, E2, NS3, NS4A, NS5A and the mature core protein. Interacts with host NEURL3; this interaction prevents E1 binding to glycoprotein E2. In terms of assembly, forms a heterodimer with envelope glycoprotein E1. Interacts with host CD81 and SCARB1 receptors; these interactions play a role in viral entry into host cell. Interacts with host EIF2AK2/PKR; this interaction inhibits EIF2AK2 and probably allows the virus to evade the innate immune response. Interacts with host CD209/DC-SIGN and CLEC4M/DC-SIGNR. Interact with host SPCS1; this interaction is essential for viral particle assembly. Interacts with protease NS2. The heterodimer E1/E2 interacts with host CLDN1; this interaction plays a role in viral entry into host cell. Part of the viral assembly initiation complex composed of NS2, E1, E2, NS3, NS4A, NS5A and the mature core protein. Interacts with host SLC3A2/4F2hc; the interaction may facilitate viral entry into host cell. Interacts with human PLSCR1. Homohexamer. Homoheptamer. Interacts with protease NS2. As to quaternary structure, homodimer. Interacts with host SPCS1; this interaction is essential for viral particle assembly. Interacts with envelope glycoprotein E1. Interacts with envelope glycoprotein E2. Interacts with viroporin p7. Interacts with serine protease/helicase NS3. Part of the replication complex composed of NS2, NS3, NS4A, NS4B, NS5A and the RNA-directed RNA polymerase embedded in an ER-derived membranous web. Part of the viral assembly initiation complex composed of NS2, E1, E2, NS3, NS4A, NS5A and the mature core protein. In terms of assembly, interacts with protease NS2. Interacts with non-structural protein 4A; this interaction stabilizes the folding of NS3 serine protease. NS3-NS4A interaction is essential for NS3 activation and allows membrane anchorage of the latter. NS3/NS4A complex also prevents phosphorylation of host IRF3, thus preventing the establishment of dsRNA induced antiviral state. Interacts with host MAVS; this interaction leads to the cleavage and inhibition of host MAVS. Interacts with host TICAM1; this interaction leads to the cleavage and inhibition of host TICAM1. Interacts with host TANK-binding kinase/TBK1; this interaction results in the inhibition of the association between TBK1 and IRF3, which leads to the inhibition of IRF3 activation. Interacts with host RBM24. Part of the replication complex composed of NS2, NS3, NS4A, NS4B, NS5A and the RNA-directed RNA polymerase embedded in an ER-derived membranous web. Part of the viral assembly initiation complex composed of NS2, E1, E2, NS3, NS4A, NS5A and the mature core protein. Interacts with NS3 serine protease; this interaction stabilizes the folding of NS3 serine protease. NS3-NS4A interaction is essential for NS3 activation and allows membrane anchorage of the latter. Interacts with non-structural protein 5A (via N-terminus). Part of the replication complex composed of NS2, NS3, NS4A, NS4B, NS5A and the RNA-directed RNA polymerase embedded in an ER-derived membranous web. Part of the viral assembly initiation complex composed of NS2, E1, E2, NS3, NS4A, NS5A and the mature core protein. As to quaternary structure, homomultimer. Interacts with non-structural protein NS5A. Interacts with host PLA2G4C; this interaction likely initiates the recruitment of replication complexes to lipid droplets. Interacts with host STING; this interaction disrupts the interaction between STING and TBK1 thereby suppressing the interferon signaling. Part of the replication complex composed of NS2, NS3, NS4A, NS4B, NS5A and the RNA-directed RNA polymerase embedded in an ER-derived membranous web. In terms of assembly, monomer. Homodimer; dimerization is required for RNA-binding. Interacts with the mature core protein. Interacts (via N-terminus) with non-structural protein 4A. Interacts with non-structural protein 4B. Interacts (via region D2) with RNA-directed RNA polymerase. Part of the viral assembly initiation complex composed of NS2, E1, E2, NS3, NS4A, NS5A and the mature core protein. Part of the replication complex composed of NS2, NS3, NS4A, NS4B, NS5A and the RNA-directed RNA polymerase embedded in an ER-derived membranous web. Interacts with host GRB2. Interacts with host BIN1. Interacts with host PIK3R1. Interacts with host SRCAP. Interacts with host FKBP8. Interacts (via C-terminus) with host VAPB (via MSP domain). Interacts with host EIF2AK2/PKR; this interaction leads to disruption of EIF2AK2 dimerization by NS5A and probably allows the virus to evade the innate immune response. Interacts (via N-terminus) with host PACSIN2 (via N-terminus); this interaction attenuates protein kinase C alpha-mediated phosphorylation of PACSIN2 by disrupting the interaction between PACSIN2 and PRKCA. Interacts (via N-terminus) with host SRC kinase (via SH2 domain). Interacts with most Src-family kinases. Interacts with host IFI27 and SKP2; promotes the ubiquitin-mediated proteasomal degradation of NS5A. Interacts with host GPS2. Interacts with host TNFRSF21; this interaction allows the modulation by the virus of JNK, p38 MAPK, STAT3, and Akt signaling pathways in a DR6-dependent manner. Interacts (via N-terminus) with host CIDEB (via N-terminus); this interaction seems to regulate the association of HCV particles with APOE. Interacts with host CHKA/Choline Kinase-alpha; CHKA bridges host PI4KA and NS5A and potentiates NS5A-stimulated PI4KA activity, which then facilitates the targeting of the ternary complex to the ER for viral replication. Interacts with host SPSB2 (via C-terminus); this interaction targets NS5A for ubiquitination and degradation. Interacts with host RAB18; this interaction may promote the association of NS5A and other replicase components with lipid droplets. Interacts (via region D2) with host PPIA/CYPA; the interaction stimulates RNA-binding ability of NS5A and is dependent on the peptidyl-prolyl cis-trans isomerase activity of PPIA/CYPA. Interacts with host TRIM14; this interaction induces the degradation of NS5A. Homooligomer. Interacts with non-structural protein 5A. Interacts with host VAPB. Interacts with host PRK2/PKN2. Interacts with host HNRNPA1 and SEPT6; these interactions facilitate viral replication. Part of the replication complex composed of NS2, NS3, NS4A, NS4B, NS5A and the RNA-directed RNA polymerase. Zn(2+) serves as cofactor. Mg(2+) is required as a cofactor. In terms of processing, specific enzymatic cleavages in vivo yield mature proteins. The structural proteins, core, E1, E2 and p7 are produced by proteolytic processing by host signal peptidases. The core protein precursor is synthesized as a 23 kDa, which is retained in the ER membrane through the hydrophobic signal peptide. Cleavage by the signal peptidase releases the 21 kDa mature core protein. The cleavage of the core protein precursor occurs between aminoacids 176 and 188 but the exact cleavage site is not known. Some degraded forms of the core protein appear as well during the course of infection. The other proteins (p7, NS2, NS3, NS4A, NS4B, NS5A and NS5B) are cleaved by the viral proteases. Autoprocessing between NS2 and NS3 is mediated by the NS2 cysteine protease catalytic domain and regulated by the NS3 N-terminal domain. Phosphorylated by host PKC and PKA. Post-translationally, ubiquitinated; mediated by UBE3A and leading to core protein subsequent proteasomal degradation. In terms of processing, highly N-glycosylated. Palmitoylation is required for NS2/3 autoprocessing and E2 recruitment to membranes. Post-translationally, palmitoylated. This modification may play a role in its polymerization or in protein-protein interactions. In terms of processing, phosphorylated on serines in a basal form termed p56. p58 is a hyperphosphorylated form of p56. p56 and p58 coexist in the cell in roughly equivalent amounts. Hyperphosphorylation is dependent on the presence of NS4A. Host CSNK1A1/CKI-alpha or RPS6KB1 kinases may be responsible for NS5A phosphorylation. Tyrosine phosphorylation is essential for the interaction with host SRC. Post-translationally, the N-terminus is phosphorylated by host PRK2/PKN2.

The protein localises to the host endoplasmic reticulum membrane. It localises to the host mitochondrion membrane. The protein resides in the virion. It is found in the host cytoplasm. Its subcellular location is the host nucleus. The protein localises to the host lipid droplet. It localises to the virion membrane. The protein resides in the host mitochondrion. It is found in the host cell membrane. Its subcellular location is the host perinuclear region. The enzyme catalyses Hydrolysis of four peptide bonds in the viral precursor polyprotein, commonly with Asp or Glu in the P6 position, Cys or Thr in P1 and Ser or Ala in P1'.. The catalysed reaction is a ribonucleoside 5'-triphosphate + H2O = a ribonucleoside 5'-diphosphate + phosphate + H(+). It catalyses the reaction ATP + H2O = ADP + phosphate + H(+). It carries out the reaction RNA(n) + a ribonucleoside 5'-triphosphate = RNA(n+1) + diphosphate. Its activity is regulated as follows. Inhibited by the antiviral drug hexamethylene amiloride. Inhibition by amantadine appears to be genotype-dependent. Also inhibited by long-alkyl-chain iminosugar derivatives. With respect to regulation, activity is up-regulated by PRK2/PKN2-mediated phosphorylation. In terms of biological role, packages viral RNA to form a viral nucleocapsid, and promotes virion budding. Participates in the viral particle production as a result of its interaction with the non-structural protein 5A. Binds RNA and may function as a RNA chaperone to induce the RNA structural rearrangements taking place during virus replication. Modulates viral translation initiation by interacting with viral IRES and 40S ribosomal subunit. Affects various cell signaling pathways, host immunity and lipid metabolism. Prevents the establishment of cellular antiviral state by blocking the interferon-alpha/beta (IFN-alpha/beta) and IFN-gamma signaling pathways and by blocking the formation of phosphorylated STAT1 and promoting ubiquitin-mediated proteasome-dependent degradation of STAT1. Activates STAT3 leading to cellular transformation. Regulates the activity of cellular genes, including c-myc and c-fos. May repress the promoter of p53, and sequester CREB3 and SP110 isoform 3/Sp110b in the cytoplasm. Represses cell cycle negative regulating factor CDKN1A, thereby interrupting an important check point of normal cell cycle regulation. Targets transcription factors involved in the regulation of inflammatory responses and in the immune response: suppresses TNF-induced NF-kappa-B activation, and activates AP-1. Binds to dendritic cells (DCs) via C1QR1, resulting in down-regulation of T-lymphocytes proliferation. Alters lipid metabolism by interacting with hepatocellular proteins involved in lipid accumulation and storage. Induces up-regulation of FAS promoter activity, and thereby contributes to the increased triglyceride accumulation in hepatocytes (steatosis). Its function is as follows. Forms a heterodimer with envelope glycoprotein E2, which mediates virus attachment to the host cell, virion internalization through clathrin-dependent endocytosis and fusion with host membrane. Fusion with the host cell is most likely mediated by both E1 and E2, through conformational rearrangements of the heterodimer required for fusion rather than a classical class II fusion mechanism. E1/E2 heterodimer binds host apolipoproteins such as APOB and ApoE thereby forming a lipo-viro-particle (LVP). APOE associated to the LVP allows the initial virus attachment to cell surface receptors such as the heparan sulfate proteoglycans (HSPGs), syndecan-1 (SDC1), syndecan-1 (SDC2), the low-density lipoprotein receptor (LDLR) and scavenger receptor class B type I (SCARB1). The cholesterol transfer activity of SCARB1 allows E2 exposure and binding of E2 to SCARB1 and the tetraspanin CD81. E1/E2 heterodimer binding on CD81 activates the epithelial growth factor receptor (EGFR) signaling pathway. Diffusion of the complex E1-E2-EGFR-SCARB1-CD81 to the cell lateral membrane allows further interaction with Claudin 1 (CLDN1) and occludin (OCLN) to finally trigger HCV entry. Forms a heterodimer with envelope glycoprotein E1, which mediates virus attachment to the host cell, virion internalization through clathrin-dependent endocytosis and fusion with host membrane. Fusion with the host cell is most likely mediated by both E1 and E2, through conformational rearrangements of the heterodimer required for fusion rather than a classical class II fusion mechanism. The interaction between envelope glycoprotein E2 and host apolipoprotein E/APOE allows the proper assembly, maturation and infectivity of the viral particles. This interaction is probably promoted via the up-regulation of cellular autophagy by the virus. E1/E2 heterodimer binds host apolipoproteins such as APOB and APOE thereby forming a lipo-viro-particle (LVP). APOE associated to the LVP allows the initial virus attachment to cell surface receptors such as the heparan sulfate proteoglycans (HSPGs), syndecan-1 (SDC1), syndecan-1 (SDC2), the low-density lipoprotein receptor (LDLR) and scavenger receptor class B type I (SCARB1). The cholesterol transfer activity of SCARB1 allows E2 exposure and binding of E2 to SCARB1 and the tetraspanin CD81. E1/E2 heterodimer binding on CD81 activates the epithelial growth factor receptor (EGFR) signaling pathway. Diffusion of the complex E1-E2-EGFR-SCARB1-CD81 to the cell lateral membrane allows further interaction with Claudin 1 (CLDN1) and occludin (OCLN) to finally trigger HCV entry. Inhibits host EIF2AK2/PKR activation, preventing the establishment of an antiviral state. Viral ligand for CD209/DC-SIGN and CLEC4M/DC-SIGNR, which are respectively found on dendritic cells (DCs), and on liver sinusoidal endothelial cells and macrophage-like cells of lymph node sinuses. These interactions allow the capture of circulating HCV particles by these cells and subsequent facilitated transmission to permissive cells such as hepatocytes and lymphocyte subpopulations. The interaction between E2 and host amino acid transporter complex formed by SLC3A2 and SLC7A5/LAT1 may facilitate viral entry into host cell. Functionally, ion channel protein that acts as a viroporin and plays an essential role in the assembly, envelopment and secretion of viral particles. Regulates the host cell secretory pathway, which induces the intracellular retention of viral glycoproteins and favors assembly of viral particles. Creates a pore in acidic organelles and releases Ca(2+) and H(+) in the cytoplasm of infected cells, leading to a productive viral infection. High levels of cytoplasmic Ca(2+) may trigger membrane trafficking and transport of viral ER-associated proteins to viroplasms, sites of viral genome replication. This ionic imbalance induces the assembly of the inflammasome complex, which triggers the maturation of pro-IL-1beta into IL-1beta through the action of caspase-1. Targets also host mitochondria and induces mitochondrial depolarization. In addition of its role as a viroporin, acts as a lipid raft adhesion factor. In terms of biological role, cysteine protease required for the proteolytic auto-cleavage between the non-structural proteins NS2 and NS3. The N-terminus of NS3 is required for the function of NS2 protease (active region NS2-3). Promotes the initiation of viral particle assembly by mediating the interaction between structural and non-structural proteins. Its function is as follows. Displays three enzymatic activities: serine protease with a chymotrypsin-like fold, NTPase and RNA helicase. NS3 serine protease, in association with NS4A, is responsible for the cleavages of NS3-NS4A, NS4A-NS4B, NS4B-NS5A and NS5A-NS5B. The NS3/NS4A complex prevents phosphorylation of host IRF3, thus preventing the establishment of dsRNA induced antiviral state. The NS3/NS4A complex induces host amino acid transporter component SLC3A2, thus contributing to HCV propagation. NS3 RNA helicase binds to RNA and unwinds both dsDNA and dsRNA in the 3' to 5' direction, and likely resolves RNA complicated stable secondary structures in the template strand. Binds a single ATP and catalyzes the unzipping of a single base pair of dsRNA. Inhibits host antiviral proteins TBK1 and IRF3 thereby preventing the establishment of an antiviral state. Cleaves host MAVS/CARDIF thereby preventing the establishment of an antiviral state. Cleaves host TICAM1/TRIF, thereby disrupting TLR3 signaling and preventing the establishment of an antiviral state. Induces a specific membrane alteration that serves as a scaffold for the virus replication complex. This membrane alteration gives rise to the so-called ER-derived membranous web that contains the replication complex. NS4B self-interaction contributes to its function in membranous web formation. Promotes host TRIF protein degradation in a CASP8-dependent manner thereby inhibiting host TLR3-mediated interferon signaling. Disrupts the interaction between STING and TBK1 contributing to the inhibition of interferon signaling. Functionally, phosphorylated protein that is indispensable for viral replication and assembly. Both hypo- and hyperphosphorylated states are required for the viral life cycle. The hyperphosphorylated form of NS5A is an inhibitor of viral replication. Involved in RNA-binding and especially in binding to the viral genome. Zinc is essential for RNA-binding. Participates in the viral particle production as a result of its interaction with the mature viral core protein. Its interaction with host VAPB may target the viral replication complex to vesicles. Down-regulates viral IRES translation initiation. Mediates interferon resistance, presumably by interacting with and inhibiting host EIF2AK2/PKR. Prevents BIN1-induced apoptosis. Acts as a transcriptional activator of some host genes important for viral replication when localized in the nucleus. Via the interaction with host PACSIN2, modulates lipid droplet formation in order to promote virion assembly. Modulates TNFRSF21/DR6 signaling pathway for viral propagation. In terms of biological role, RNA-dependent RNA polymerase that performs primer-template recognition and RNA synthesis during viral replication. Initiates RNA transcription/replication at a flavin adenine dinucleotide (FAD), resulting in a 5'- FAD cap on viral RNAs. In this way, recognition of viral 5' RNA by host pattern recognition receptors can be bypassed, thereby evading activation of antiviral pathways. In Homo sapiens (Human), this protein is Genome polyprotein.